The primary structure comprises 98 residues: NADH-ubiquinone oxidoreductase chain 4L (98 aa).

3 helical membrane-spanning segments follow: residues 1-21 (MPYIYMNITLAFVISLIGTLM), 29-49 (SLLCLEGMMLSLFTLNALLSL), and 61-81 (LILLVFAACEAAVGLALLVMI).

Belongs to the complex I subunit 4L family. In terms of assembly, core subunit of respiratory chain NADH dehydrogenase (Complex I) which is composed of 45 different subunits.

The protein resides in the mitochondrion inner membrane. It catalyses the reaction a ubiquinone + NADH + 5 H(+)(in) = a ubiquinol + NAD(+) + 4 H(+)(out). Core subunit of the mitochondrial membrane respiratory chain NADH dehydrogenase (Complex I) which catalyzes electron transfer from NADH through the respiratory chain, using ubiquinone as an electron acceptor. Part of the enzyme membrane arm which is embedded in the lipid bilayer and involved in proton translocation. This chain is NADH-ubiquinone oxidoreductase chain 4L (MT-ND4L), found in Loxodonta africana (African elephant).